Here is a 384-residue protein sequence, read N- to C-terminus: Neuropeptide Y receptor type 2 (384 aa).

Topologically, residues 1 to 54 (MKMGPLGAEADENQTVEEMKVDQFGPGHTTLPGELAPDSEPELIDSTKLIEVQV) are extracellular. The N-linked (GlcNAc...) asparagine glycan is linked to N13. The chain crosses the membrane as a helical span at residues 55–75 (VLILAYCSIILLGVIGNSLVI). Residues 76-89 (HVVIKFKSMRTVTN) lie on the Cytoplasmic side of the membrane. Residues 90–110 (FFIANLAVADLLVNTLCLPFT) traverse the membrane as a helical segment. Topologically, residues 111 to 127 (LTYTLMGEWKMGPVLCH) are extracellular. A disulfide bond links C126 and C206. Residues 128–148 (LVPYAQGLAVQVSTITLTVIA) form a helical membrane-spanning segment. Topologically, residues 149 to 168 (LDRHRCIVYHLESKISKQIS) are cytoplasmic. The helical transmembrane segment at 169 to 189 (FLIIGLAWGVSALLASPLAIF) threads the bilayer. Topologically, residues 190-219 (REYSLIEIIPDFEIVACTEKWPGEEKGIYG) are extracellular. Residues 220–240 (TIYSLSSLLILYVLPLGIISF) form a helical membrane-spanning segment. Over 241–271 (SYTRIWSKLKNHVSPGAAHDHYHQRRQKTTK) the chain is Cytoplasmic. Residues 272 to 292 (MLVCVVVVFAVSWLPLHAFQL) traverse the membrane as a helical segment. Residues 293-307 (AVDIDSHVLDLKEYK) lie on the Extracellular side of the membrane. The chain crosses the membrane as a helical span at residues 308 to 328 (LIFTVFHIIAMCSTFANPLLY). Topologically, residues 329-384 (GWMNSNYRKAFLSAFRCEQRLDAIHSEVSVTFKAKKHLQVTKNNGPNDSFTETTNV) are cytoplasmic. A lipid anchor (S-palmitoyl cysteine) is attached at C345.

It belongs to the G-protein coupled receptor 1 family.

It localises to the cell membrane. Functionally, receptor for neuropeptide Y and peptide YY. In Bos taurus (Bovine), this protein is Neuropeptide Y receptor type 2 (NPY2R).